The sequence spans 459 residues: Tubulin gamma chain (459 aa).

Position 142–148 (142–148) interacts with GTP; sequence AGGTGSG. The tract at residues 440–459 is disordered; it reads ADYLTKETAPTDEAEDKRAG.

The protein belongs to the tubulin family.

Its subcellular location is the cytoplasm. The protein resides in the cytoskeleton. It is found in the microtubule organizing center. The protein localises to the spindle pole body. Tubulin is the major constituent of microtubules. The gamma chain is found at microtubule organizing centers (MTOC) such as the spindle poles or the centrosome, suggesting that it is involved in the minus-end nucleation of microtubule assembly. The sequence is that of Tubulin gamma chain (TUB4) from Cochliobolus heterostrophus (strain C5 / ATCC 48332 / race O) (Southern corn leaf blight fungus).